Consider the following 324-residue polypeptide: Putative S-adenosyl-L-methionine-dependent methyltransferase MUL_0818 (324 aa).

S-adenosyl-L-methionine is bound by residues aspartate 138 and 167–168 (DL).

Belongs to the UPF0677 family.

Functionally, exhibits S-adenosyl-L-methionine-dependent methyltransferase activity. In Mycobacterium ulcerans (strain Agy99), this protein is Putative S-adenosyl-L-methionine-dependent methyltransferase MUL_0818.